We begin with the raw amino-acid sequence, 318 residues long: Transaldolase (318 aa).

Lysine 132 acts as the Schiff-base intermediate with substrate in catalysis.

Belongs to the transaldolase family. Type 1 subfamily. In terms of assembly, homodimer.

It is found in the cytoplasm. It carries out the reaction D-sedoheptulose 7-phosphate + D-glyceraldehyde 3-phosphate = D-erythrose 4-phosphate + beta-D-fructose 6-phosphate. It participates in carbohydrate degradation; pentose phosphate pathway; D-glyceraldehyde 3-phosphate and beta-D-fructose 6-phosphate from D-ribose 5-phosphate and D-xylulose 5-phosphate (non-oxidative stage): step 2/3. Transaldolase is important for the balance of metabolites in the pentose-phosphate pathway. This is Transaldolase from Shewanella baltica (strain OS223).